Here is a 1103-residue protein sequence, read N- to C-terminus: DNA polymerase delta catalytic subunit (1103 aa).

Residues Met1 to Ser29 form a disordered region. Residues Lys4–Arg19 carry the Nuclear localization signal motif. An Omega-N-methylarginine modification is found at Arg19. Lys570 is covalently cross-linked (Glycyl lysine isopeptide (Lys-Gly) (interchain with G-Cter in SUMO2)). Positions 1008, 1011, 1022, and 1025 each coordinate Zn(2+). The CysA-type zinc-finger motif lies at Cys1008–Cys1025. The [4Fe-4S] cluster site is built by Cys1054, Cys1057, Cys1067, and Cys1072. The short motif at Cys1054–Cys1072 is the CysB motif element.

Belongs to the DNA polymerase type-B family. As to quaternary structure, component of the tetrameric DNA polymerase delta complex (Pol-delta4), which consists of POLD1/p125, POLD2/p50, POLD3/p66/p68 and POLD4/p12, with POLD1 bearing both DNA polymerase and 3' to 5' proofreading exonuclease activities. Within Pol-delta4, directly interacts with POLD2 and POLD4. Following genotoxic stress by DNA-damaging agents, such as ultraviolet light and methyl methanesulfonate, or by replication stress induced by treatment with hydroxyurea or aphidicolin, Pol-delta4 is converted into a trimeric form of the complex (Pol-delta3) by POLD4 degradation. Pol-delta3 is the major form at S phase replication sites and DNA damage sites. POLD1 displays different catalytic properties depending upon the complex it is found in. It exhibits higher proofreading activity and fidelity than Pol-delta4, making it particularly well suited to respond to DNA damage. Directly interacts with PCNA, as do POLD3 and POLD4; this interaction stimulates Pol-delta4 polymerase activity. As POLD2 and POLD4, directly interacts with WRNIP1; this interaction stimulates DNA polymerase delta-mediated DNA synthesis, independently of the presence of PCNA. This stimulation may be due predominantly to an increase of initiation frequency and also to increased processivity. Also observed as a dimeric complex with POLD2 (Pol-delta2). Pol-delta2 is relatively insensitive to the PCNA stimulation (2-5-fold) compared to Pol-delta4 that is stimulated by over 50-fold. The DNA polymerase delta complex interacts with POLDIP2; this interaction is probably mediated through direct binding to POLD2. Interacts with CIAO1. Interacts with POLDIP2. Interacts with RFC1. The cofactor is [4Fe-4S] cluster.

The protein resides in the nucleus. It catalyses the reaction DNA(n) + a 2'-deoxyribonucleoside 5'-triphosphate = DNA(n+1) + diphosphate. Its activity is regulated as follows. Regulated by alteration of quaternary structure. Exhibits burst rates of DNA synthesis are about 5 times faster in the presence of POLD4 (Pol-delta4 complex) than in its absence (Pol-delta3 complex), while the affinity of the enzyme for its DNA and dNTP substrates appears unchanged. The Pol-delta3 complex is more likely to proofread DNA synthesis because it cleaves single-stranded DNA twice as fast and transfers mismatched DNA from the polymerase to the exonuclease sites 9 times faster compared to the Pol-delta3 complex. Pol-delta3 also extends mismatched primers 3 times more slowly in the absence of POLD4. The conversion of Pol-delta4 into Pol-delta3 is induced by genotoxic stress or by replication stress leading POLD4 degradation. Stimulated in the presence of PCNA. This stimulation is further increased in the presence of KCTD13/PDIP1, most probably via direct interaction between KCTD13 and POLD2. As the catalytic component of the trimeric (Pol-delta3 complex) and tetrameric DNA polymerase delta complexes (Pol-delta4 complex), plays a crucial role in high fidelity genome replication, including in lagging strand synthesis, and repair. Exhibits both DNA polymerase and 3'- to 5'-exonuclease activities. Requires the presence of accessory proteins POLD2, POLD3 and POLD4 for full activity. Depending upon the absence (Pol-delta3) or the presence of POLD4 (Pol-delta4), displays differences in catalytic activity. Most notably, expresses higher proofreading activity in the context of Pol-delta3 compared with that of Pol-delta4. Although both Pol-delta3 and Pol-delta4 process Okazaki fragments in vitro, Pol-delta3 may be better suited to fulfill this task, exhibiting near-absence of strand displacement activity compared to Pol-delta4 and stalling on encounter with the 5'-blocking oligonucleotides. Pol-delta3 idling process may avoid the formation of a gap, while maintaining a nick that can be readily ligated. Along with DNA polymerase kappa, DNA polymerase delta carries out approximately half of nucleotide excision repair (NER) synthesis following UV irradiation. Under conditions of DNA replication stress, in the presence of POLD3 and POLD4, may catalyze the repair of broken replication forks through break-induced replication (BIR). Involved in the translesion synthesis (TLS) of templates carrying O6-methylguanine, 8oxoG or abasic sites. The polypeptide is DNA polymerase delta catalytic subunit (POLD1) (Mesocricetus auratus (Golden hamster)).